A 517-amino-acid chain; its full sequence is Bifunctional purine biosynthesis protein PurH (517 aa).

The MGS-like domain occupies 1–146 (MGRLVLLSVS…KNFAHLTVLC (146 aa)).

The protein belongs to the PurH family.

The catalysed reaction is (6R)-10-formyltetrahydrofolate + 5-amino-1-(5-phospho-beta-D-ribosyl)imidazole-4-carboxamide = 5-formamido-1-(5-phospho-D-ribosyl)imidazole-4-carboxamide + (6S)-5,6,7,8-tetrahydrofolate. It carries out the reaction IMP + H2O = 5-formamido-1-(5-phospho-D-ribosyl)imidazole-4-carboxamide. The protein operates within purine metabolism; IMP biosynthesis via de novo pathway; 5-formamido-1-(5-phospho-D-ribosyl)imidazole-4-carboxamide from 5-amino-1-(5-phospho-D-ribosyl)imidazole-4-carboxamide (10-formyl THF route): step 1/1. It functions in the pathway purine metabolism; IMP biosynthesis via de novo pathway; IMP from 5-formamido-1-(5-phospho-D-ribosyl)imidazole-4-carboxamide: step 1/1. The protein is Bifunctional purine biosynthesis protein PurH of Gloeothece citriformis (strain PCC 7424) (Cyanothece sp. (strain PCC 7424)).